The primary structure comprises 195 residues: ATP-dependent Clp protease proteolytic subunit (195 aa).

Residue serine 98 is the Nucleophile of the active site. Histidine 123 is a catalytic residue.

The protein belongs to the peptidase S14 family. As to quaternary structure, fourteen ClpP subunits assemble into 2 heptameric rings which stack back to back to give a disk-like structure with a central cavity, resembling the structure of eukaryotic proteasomes.

The protein localises to the cytoplasm. It catalyses the reaction Hydrolysis of proteins to small peptides in the presence of ATP and magnesium. alpha-casein is the usual test substrate. In the absence of ATP, only oligopeptides shorter than five residues are hydrolyzed (such as succinyl-Leu-Tyr-|-NHMec, and Leu-Tyr-Leu-|-Tyr-Trp, in which cleavage of the -Tyr-|-Leu- and -Tyr-|-Trp bonds also occurs).. Its function is as follows. Cleaves peptides in various proteins in a process that requires ATP hydrolysis. Has a chymotrypsin-like activity. Plays a major role in the degradation of misfolded proteins. The chain is ATP-dependent Clp protease proteolytic subunit from Helicobacter pylori (strain J99 / ATCC 700824) (Campylobacter pylori J99).